A 272-amino-acid polypeptide reads, in one-letter code: Ribosomal RNA small subunit methyltransferase A (272 aa).

6 residues coordinate S-adenosyl-L-methionine: Asn18, Leu20, Gly45, Glu66, Asp91, and Asn113.

It belongs to the class I-like SAM-binding methyltransferase superfamily. rRNA adenine N(6)-methyltransferase family. RsmA subfamily.

It localises to the cytoplasm. It catalyses the reaction adenosine(1518)/adenosine(1519) in 16S rRNA + 4 S-adenosyl-L-methionine = N(6)-dimethyladenosine(1518)/N(6)-dimethyladenosine(1519) in 16S rRNA + 4 S-adenosyl-L-homocysteine + 4 H(+). Functionally, specifically dimethylates two adjacent adenosines (A1518 and A1519) in the loop of a conserved hairpin near the 3'-end of 16S rRNA in the 30S particle. May play a critical role in biogenesis of 30S subunits. The chain is Ribosomal RNA small subunit methyltransferase A from Pectobacterium atrosepticum (strain SCRI 1043 / ATCC BAA-672) (Erwinia carotovora subsp. atroseptica).